The following is a 137-amino-acid chain: ATP synthase epsilon chain (137 aa).

The protein belongs to the ATPase epsilon chain family. F-type ATPases have 2 components, CF(1) - the catalytic core - and CF(0) - the membrane proton channel. CF(1) has five subunits: alpha(3), beta(3), gamma(1), delta(1), epsilon(1). CF(0) has three main subunits: a, b and c.

Its subcellular location is the cell membrane. Its function is as follows. Produces ATP from ADP in the presence of a proton gradient across the membrane. This chain is ATP synthase epsilon chain, found in Streptococcus agalactiae serotype Ia (strain ATCC 27591 / A909 / CDC SS700).